Consider the following 145-residue polypeptide: D-aminoacyl-tRNA deacylase (145 aa).

Residues 137-138 (GP) carry the Gly-cisPro motif, important for rejection of L-amino acids motif.

It belongs to the DTD family. As to quaternary structure, homodimer.

The protein resides in the cytoplasm. It catalyses the reaction glycyl-tRNA(Ala) + H2O = tRNA(Ala) + glycine + H(+). The enzyme catalyses a D-aminoacyl-tRNA + H2O = a tRNA + a D-alpha-amino acid + H(+). Its function is as follows. An aminoacyl-tRNA editing enzyme that deacylates mischarged D-aminoacyl-tRNAs. Also deacylates mischarged glycyl-tRNA(Ala), protecting cells against glycine mischarging by AlaRS. Acts via tRNA-based rather than protein-based catalysis; rejects L-amino acids rather than detecting D-amino acids in the active site. By recycling D-aminoacyl-tRNA to D-amino acids and free tRNA molecules, this enzyme counteracts the toxicity associated with the formation of D-aminoacyl-tRNA entities in vivo and helps enforce protein L-homochirality. This is D-aminoacyl-tRNA deacylase from Sodalis glossinidius (strain morsitans).